The sequence spans 163 residues: UPF0262 protein RPC_4416 (163 aa).

Belongs to the UPF0262 family.

The protein is UPF0262 protein RPC_4416 of Rhodopseudomonas palustris (strain BisB18).